The following is a 722-amino-acid chain: G2-specific protein kinase fin1 (722 aa).

Residues Tyr4–Leu281 form the Protein kinase domain. ATP-binding positions include Ile10–Ile18 and Lys33. Asp151 acts as the Proton acceptor in catalysis. Positions Leu528–Lys557 are disordered. Residues Thr535–Pro546 show a composition bias toward polar residues.

Belongs to the protein kinase superfamily. Ser/Thr protein kinase family. NIMA subfamily.

The protein localises to the cytoplasm. Its subcellular location is the cytoskeleton. It localises to the microtubule organizing center. The protein resides in the spindle pole body. The catalysed reaction is L-seryl-[protein] + ATP = O-phospho-L-seryl-[protein] + ADP + H(+). The enzyme catalyses L-threonyl-[protein] + ATP = O-phospho-L-threonyl-[protein] + ADP + H(+). Promotes chromosome condensation and nuclear envelope dynamics during mitosis. Activity appears at metaphase-anaphase transition. This is G2-specific protein kinase fin1 (fin1) from Schizosaccharomyces pombe (strain 972 / ATCC 24843) (Fission yeast).